The following is a 252-amino-acid chain: 3-dehydroquinate dehydratase (252 aa).

Residues 46-48 and Arg-82 contribute to the 3-dehydroquinate site; that span reads EWR. The active-site Proton donor/acceptor is His-143. Residue Lys-170 is the Schiff-base intermediate with substrate of the active site. 3 residues coordinate 3-dehydroquinate: Arg-212, Ser-231, and Gln-235.

The protein belongs to the type-I 3-dehydroquinase family. Homodimer.

It carries out the reaction 3-dehydroquinate = 3-dehydroshikimate + H2O. It participates in metabolic intermediate biosynthesis; chorismate biosynthesis; chorismate from D-erythrose 4-phosphate and phosphoenolpyruvate: step 3/7. Its function is as follows. Involved in the third step of the chorismate pathway, which leads to the biosynthesis of aromatic amino acids. Catalyzes the cis-dehydration of 3-dehydroquinate (DHQ) and introduces the first double bond of the aromatic ring to yield 3-dehydroshikimate. The polypeptide is 3-dehydroquinate dehydratase (Listeria monocytogenes serotype 4a (strain HCC23)).